A 226-amino-acid polypeptide reads, in one-letter code: EEF1A lysine methyltransferase 3 (226 aa).

Residues W57, G83–G85, D104, W133, and A150 contribute to the S-adenosyl-L-methionine site.

Belongs to the methyltransferase superfamily. METTL21 family. Interacts with members of the heat shock protein 70 and 90 families and of the TCP-1 chaperonin family, as well as with HSPD1, STIP1 and tubulin; at least some of these proteins may be methylation substrates.

The protein localises to the cytoplasm. It localises to the cytoskeleton. It is found in the microtubule organizing center. The protein resides in the centrosome. It catalyses the reaction L-lysyl-[protein] + 3 S-adenosyl-L-methionine = N(6),N(6),N(6)-trimethyl-L-lysyl-[protein] + 3 S-adenosyl-L-homocysteine + 3 H(+). The catalysed reaction is L-lysyl-[protein] + S-adenosyl-L-methionine = N(6)-methyl-L-lysyl-[protein] + S-adenosyl-L-homocysteine + H(+). The enzyme catalyses N(6)-methyl-L-lysyl-[protein] + S-adenosyl-L-methionine = N(6),N(6)-dimethyl-L-lysyl-[protein] + S-adenosyl-L-homocysteine + H(+). It carries out the reaction N(6),N(6)-dimethyl-L-lysyl-[protein] + S-adenosyl-L-methionine = N(6),N(6),N(6)-trimethyl-L-lysyl-[protein] + S-adenosyl-L-homocysteine + H(+). In terms of biological role, protein-lysine methyltransferase that selectively mono-, di- and trimethylates 'Lys-165' of the translation elongation factors EEF1A1 and EEF1A2 in an aminoacyl-tRNA and GTP-dependent manner. EEF1A1 methylation by EEF1AKMT3 is dynamic as well as inducible by stress conditions, such as ER-stress, and plays a regulatory role on mRNA translation. In Bos taurus (Bovine), this protein is EEF1A lysine methyltransferase 3.